The sequence spans 448 residues: Fibulin-5 (448 aa).

Positions M1–A23 are cleaved as a signal peptide. Residues D42 to N82 enclose the EGF-like 1; calcium-binding domain. 17 cysteine pairs are disulfide-bonded: C46–C59, C53–C68, C131–C144, C138–C153, C155–C166, C172–C181, C177–C190, C192–C205, C211–C221, C217–C230, C232–C245, C251–C262, C258–C271, C273–C286, C292–C305, C299–C314, and C320–C332. The Cell attachment site motif lies at R54–D56. Positions D127–L167 constitute an EGF-like 2; calcium-binding domain. An EGF-like 3; calcium-binding domain is found at D168–Q206. The region spanning D207–S246 is the EGF-like 4; calcium-binding domain. Residues C245–F448 are interaction with LOXL1. The region spanning D247–Q287 is the EGF-like 5; calcium-binding domain. N-linked (GlcNAc...) asparagine glycosylation is found at N283 and N296. Residues D288–M333 form the EGF-like 6; calcium-binding domain.

The protein belongs to the fibulin family. Homodimer. Monomer, homodimerizes in presence of Ca(2+). Interacts with ELN. Interacts (via N-terminus) with the integrins ITGAV/ITGB3, ITGAV/ITGB5 and ITGA9/ITGB1. Interacts with FBN1 (via N-terminal domain). Forms a ternary complex with ELN and FBN1. Interacts with EFEMP2 with moderate affinity. Interacts with LOXL1. Post-translationally, N-glycosylated.

It is found in the secreted. The protein localises to the extracellular space. Its subcellular location is the extracellular matrix. Its function is as follows. Essential for elastic fiber formation, is involved in the assembly of continuous elastin (ELN) polymer and promotes the interaction of microfibrils and ELN. Stabilizes and organizes elastic fibers in the skin, lung and vasculature. Promotes adhesion of endothelial cells through interaction of integrins and the RGD motif. Vascular ligand for integrin receptors which may play a role in vascular development and remodeling. May act as an adapter that mediates the interaction between FBN1 and ELN. The chain is Fibulin-5 (Fbln5) from Mus musculus (Mouse).